A 275-amino-acid chain; its full sequence is PE family protein PE8 (275 aa).

The PE domain occupies Lys5 to Leu93.

The protein belongs to the mycobacterial PE family. In terms of assembly, forms a heterodimer with PPE15. The dimer forms a 1:1:1 heterotrimeric complex with EspG5.

The protein resides in the secreted. The protein localises to the cell wall. Functionally, promotes the intracellular survival of recombinant Mycobacterium within macrophages by regulating host inflammatory cytokines production and inhibiting cell late apoptosis. This chain is PE family protein PE8, found in Mycobacterium tuberculosis (strain ATCC 25618 / H37Rv).